A 513-amino-acid polypeptide reads, in one-letter code: Glutamyl-tRNA(Gln) amidotransferase subunit B, mitochondrial (513 aa).

Belongs to the GatB/GatE family. GatB subfamily. In terms of assembly, subunit of the heterotrimeric GatFAB amidotransferase (AdT) complex, composed of A, B and F subunits.

It is found in the mitochondrion. It catalyses the reaction L-glutamyl-tRNA(Gln) + L-glutamine + ATP + H2O = L-glutaminyl-tRNA(Gln) + L-glutamate + ADP + phosphate + H(+). Its function is as follows. Allows the formation of correctly charged Gln-tRNA(Gln) through the transamidation of misacylated Glu-tRNA(Gln) in the mitochondria. The reaction takes place in the presence of glutamine and ATP through an activated gamma-phospho-Glu-tRNA(Gln). The chain is Glutamyl-tRNA(Gln) amidotransferase subunit B, mitochondrial from Debaryomyces hansenii (strain ATCC 36239 / CBS 767 / BCRC 21394 / JCM 1990 / NBRC 0083 / IGC 2968) (Yeast).